The primary structure comprises 96 residues: Exopolysaccharide production repressor protein (96 aa).

Transmembrane regions (helical) follow at residues 6-26 (FVVS…FLTG) and 35-55 (TLLC…FLVW). Positions 64-96 (LSPGQLPADPTNDEKQTGKLSLRRLNRPPHFNS) are disordered.

It is found in the cell membrane. It participates in glycan metabolism; exopolysaccharide biosynthesis. Its function is as follows. Inhibition of exopolysaccharide synthesis (EPS) and nodulation ability (NOD). The polypeptide is Exopolysaccharide production repressor protein (exoX) (Sinorhizobium fredii (strain NBRC 101917 / NGR234)).